We begin with the raw amino-acid sequence, 652 residues long: ATP-dependent RNA helicase DDX51 (652 aa).

Positions 1-145 (MALFTINRYL…KAEKAEELTS (145 aa)) are disordered. Residues 25–34 (KALLAKLQKQ) show a composition bias toward low complexity. Basic and acidic residues-rich tracts occupy residues 66 to 77 (LQETKGKIKKSE) and 107 to 122 (VIVKIEENESENEKSV). Residues 212–220 (FFPVQAEVI) carry the Q motif motif. Residues 234–442 (GPGGYRPRDV…LLDLHQPRLF (209 aa)) form the Helicase ATP-binding domain. 247–254 (APTGSGKT) is an ATP binding site. A DEAD box motif is present at residues 362-365 (DEAD). The Helicase C-terminal domain occupies 480–626 (IILHFLLRLK…KQHVHPEALK (147 aa)).

It belongs to the DEAD box helicase family. DDX51/DBP6 subfamily.

It localises to the nucleus. It is found in the nucleolus. It catalyses the reaction ATP + H2O = ADP + phosphate + H(+). ATP-binding RNA helicase involved in the biogenesis of 60S ribosomal subunits. This chain is ATP-dependent RNA helicase DDX51 (ddx51), found in Danio rerio (Zebrafish).